Reading from the N-terminus, the 632-residue chain is Extracellular metalloproteinase 1 (632 aa).

The first 19 residues, 1–19 (MHGLLLAAGLISLPLHVLA), serve as a signal peptide directing secretion. Positions 20–246 (HPQPSSTSLA…VVDYVAHATF (227 aa)) are excised as a propeptide. N-linked (GlcNAc...) asparagine glycosylation occurs at N284. T430 provides a ligand contact to Zn(2+). H431 is a catalytic residue. S434 provides a ligand contact to Zn(2+). N591 carries an N-linked (GlcNAc...) asparagine glycan.

It belongs to the peptidase M36 family. Zn(2+) serves as cofactor.

The protein localises to the secreted. With respect to regulation, PMSF, soybean trypsin inhibitor (SBTI) and chymostatin strongly inhibit the proteinase. In terms of biological role, secreted metalloproteinase probably acting as a virulence factor. The protein is Extracellular metalloproteinase 1 (MEP1) of Arthroderma otae (Microsporum canis).